The following is a 3073-amino-acid chain: Adhesion G-protein coupled receptor G4 (3073 aa).

Positions 1–25 are cleaved as a signal peptide; sequence MRKHILHQRLCGLILVSSFIFLTDS. Residues 26 to 2691 are Extracellular-facing; it reads LSLKGKRLDF…RSTVDAVNER (2666 aa). In terms of domain architecture, Pentraxin (PTX) spans 29–228; the sequence is KGKRLDFYGE…SPTVDRRLRC (200 aa). Intrachain disulfides connect C58–C123 and C200–C228. N-linked (GlcNAc...) asparagine glycosylation is present at N233. Residues 253–272 are disordered; it reads SQTTGLNPHKTSHSSTLLPE. N-linked (GlcNAc...) asparagine glycosylation occurs at N662. Composition is skewed to polar residues over residues 671 to 696 and 929 to 951; these read GNAT…ESKV and GNSA…SSST. Disordered regions lie at residues 671–697 and 924–951; these read GNAT…SKVT and SEKS…SSST. N-linked (GlcNAc...) asparagine glycosylation is found at N1141, N1304, and N1495. 3 disordered regions span residues 1565-1595, 1741-1760, and 1945-1972; these read FTSS…AGPT, TLTN…STPT, and ITLS…SDSR. Over residues 1945–1954 the composition is skewed to polar residues; that stretch reads ITLSSNPSVN. The span at 1955–1972 shows a compositional bias: low complexity; it reads SRATSPTWSSSSLPSDSR. In terms of domain architecture, GAIN-B spans 2535-2684; it reads SSEEVIAPQI…GVLMDLSRST (150 aa). 2 disulfides stabilise this stretch: C2635-C2666 and C2654-C2668. Positions 2635–2684 are GPS; that stretch reads CAFWDFDTNNGLGGWNPSGCKLKESNINYTICQCNHLTHFGVLMDLSRST. A stachel region spans residues 2673 to 2684; it reads HFGVLMDLSRST. Residues 2692–2712 form a helical membrane-spanning segment; that stretch reads ILVIITYTGCGISSIFLGIAM. Over 2713 to 2728 the chain is Cytoplasmic; sequence VTYIAFHKLRKDYPSK. The chain crosses the membrane as a helical span at residues 2729-2749; it reads ILINLCTALLMLNLAFLVNSW. Residues 2750 to 2755 lie on the Extracellular side of the membrane; it reads LTSFQK. The helical transmembrane segment at 2756-2776 threads the bilayer; sequence VGLCITAAVALHYFLLVSLTW. C2759 and C2836 are joined by a disulfide. At 2777 to 2798 the chain is on the cytoplasmic side; sequence MGLEAVHMYFALVKVFNTYIPN. A helical membrane pass occupies residues 2799 to 2819; the sequence is YILKFCLAGWGIPAITVAIIL. The Extracellular segment spans residues 2820–2842; it reads SVRKDLYGTLSPTTPFCWIKDDH. The helical transmembrane segment at 2843–2863 threads the bilayer; the sequence is IFYISVVAYFCLIFLMNLSMF. The Cytoplasmic portion of the chain corresponds to 2864–2892; that stretch reads CTVLVQLTSVKSQSQKTRKKMILNDLKGT. The helical transmembrane segment at 2893–2913 threads the bilayer; sequence ISLTFLLGLTWGFAFFAWGPV. Residue R2914 is a topological domain, extracellular. A helical transmembrane segment spans residues 2915-2935; the sequence is IFFLYLFAICNTLQGFLIFVF. The Cytoplasmic portion of the chain corresponds to 2936–3073; sequence YCVMKESVRE…SSGLGEMFNL (138 aa).

Belongs to the G-protein coupled receptor 2 family. Adhesion G-protein coupled receptor (ADGR) subfamily. In terms of assembly, homodimer; homodimerizes via its Pentraxin domain in a calcium-independent manner. Heterodimer of 2 chains generated by proteolytic processing; the large extracellular N-terminal fragment and the membrane-bound C-terminal fragment predominantly remain associated and non-covalently linked. Post-translationally, autoproteolytically processed at the GPS region of the GAIN-B domain; this cleavage modulates receptor activity.

It is found in the membrane. With respect to regulation, forms a heterodimer of 2 chains generated by proteolytic processing that remain associated through non-covalent interactions mediated by the GAIN-B domain. In the inactivated receptor, the Stachel sequence (also named stalk) is embedded in the GAIN-B domain, where it adopts a beta-strand conformation. On activation, the Stachel moves into the 7 transmembrane region and adopts a twisted hook-shaped configuration that forms contacts within the receptor, leading to coupling of a G-alpha protein, which activates signaling. The cleaved GAIN-B and N-terminal domains can then dissociate from the rest of the receptor. Orphan adhesion G-protein coupled receptor (aGPCR). Ligand binding causes a conformation change that triggers signaling via guanine nucleotide-binding proteins (G proteins) and modulates the activity of downstream effectors, such as adenylate cyclase. ADGRG4 is coupled to G(s) G proteins and mediates activation of adenylate cyclase activity. May be act as sensor of mechanical forces. This Mus musculus (Mouse) protein is Adhesion G-protein coupled receptor G4.